The sequence spans 225 residues: UPF0758 protein BAV2405 (225 aa).

The MPN domain maps to 103-225 (AMKHPEEVRR…ALSMAERGLI (123 aa)). Residues His174, His176, and Asp187 each contribute to the Zn(2+) site. The short motif at 174–187 (HNHPSGNPQPSAAD) is the JAMM motif element.

It belongs to the UPF0758 family.

The polypeptide is UPF0758 protein BAV2405 (Bordetella avium (strain 197N)).